The chain runs to 242 residues: MSKIWILLLLVGAVQFARGFPALEEEQEDDVIDWPSFEYDLSDEERGKGLDWLKKQWGKLKNSFKKVGAKVTATFNKGRDYLKKKGIKVDPLNCQGNKCRSCVIFTLKPKKFCIEYVFSTSAITVSLIKEKDDEEKVLLGPFTIKTGNIPKCCKLGSFIGELCLQGVEGRLKSSNGKPHVNLCVGLLLKKFGCGAKICVSYVDGKFSVSFKPKLFAGDEENGTIMEAGEKEDEGKVIDAVPE.

A signal peptide spans 1 to 19 (MSKIWILLLLVGAVQFARG). Positions 20-46 (FPALEEEQEDDVIDWPSFEYDLSDEER) are excised as a propeptide.

The protein belongs to the redulysin-like family. Post-translationally, contains 5 disulfide bonds. As to expression, expressed by the venom gland (posterior main gland) (at protein level).

It is found in the secreted. Its function is as follows. Highly abundant protein that may be responsible for the observed disruption of sensory neuron membranes, since it is homologous to proteins such as trialysin, which forms pores in lipid bilayers. Probable insecticidal toxin. The protein is Venom redulysin 2 of Platymeris rhadamanthus (Red spot assassin bug).